Reading from the N-terminus, the 396-residue chain is Elongation factor Tu (396 aa).

In terms of domain architecture, tr-type G spans 10-205 (KPHVNIGTIG…AVDESIPDPV (196 aa)). The interval 19–26 (GHVDHGKT) is G1. 19-26 (GHVDHGKT) contributes to the GTP binding site. Residue T26 coordinates Mg(2+). Positions 62–66 (GITIN) are G2. The tract at residues 83–86 (DAPG) is G3. Residues 83–87 (DAPGH) and 138–141 (NKAD) each bind GTP. Residues 138 to 141 (NKAD) are G4. The tract at residues 175 to 177 (SAL) is G5.

It belongs to the TRAFAC class translation factor GTPase superfamily. Classic translation factor GTPase family. EF-Tu/EF-1A subfamily. In terms of assembly, monomer.

It localises to the cytoplasm. It carries out the reaction GTP + H2O = GDP + phosphate + H(+). In terms of biological role, GTP hydrolase that promotes the GTP-dependent binding of aminoacyl-tRNA to the A-site of ribosomes during protein biosynthesis. The chain is Elongation factor Tu from Rhodococcus jostii (strain RHA1).